A 25-amino-acid polypeptide reads, in one-letter code: Alanine racemase (25 aa).

Belongs to the alanine racemase family. In terms of assembly, homodimer. Requires pyridoxal 5'-phosphate as cofactor.

It catalyses the reaction L-alanine = D-alanine. It functions in the pathway amino-acid biosynthesis; D-alanine biosynthesis; D-alanine from L-alanine: step 1/1. Its function is as follows. Catalyzes the interconversion of L-alanine and D-alanine. This is Alanine racemase from Pseudomonas fluorescens.